We begin with the raw amino-acid sequence, 250 residues long: Diaminopimelate epimerase (250 aa).

Asparagine 11 and asparagine 60 together coordinate substrate. Cysteine 69 acts as the Proton donor in catalysis. Substrate-binding positions include 70-71 (GN), asparagine 164, and 182-183 (ER). The active-site Proton acceptor is cysteine 192. Residue 193 to 194 (GT) participates in substrate binding.

This sequence belongs to the diaminopimelate epimerase family. Homodimer.

It localises to the cytoplasm. It carries out the reaction (2S,6S)-2,6-diaminopimelate = meso-2,6-diaminopimelate. Its pathway is amino-acid biosynthesis; L-lysine biosynthesis via DAP pathway; DL-2,6-diaminopimelate from LL-2,6-diaminopimelate: step 1/1. Its function is as follows. Catalyzes the stereoinversion of LL-2,6-diaminopimelate (L,L-DAP) to meso-diaminopimelate (meso-DAP), a precursor of L-lysine and an essential component of the bacterial peptidoglycan. This is Diaminopimelate epimerase from Nitratiruptor sp. (strain SB155-2).